A 410-amino-acid polypeptide reads, in one-letter code: E3 SUMO-protein ligase EGR2 (410 aa).

Low complexity predominate over residues proline 68–proline 83. 3 disordered regions span residues proline 68 to threonine 95, proline 101 to threonine 120, and proline 127 to serine 151. An HCFC1-binding-motif (HBM) motif is present at residues aspartate 104–tyrosine 107. Positions proline 127–tyrosine 143 are enriched in low complexity. Lysine 188 carries the post-translational modification N6-acetyllysine. The segment at proline 217–aspartate 286 is disordered. Residues threonine 222 to glutamate 231 are compositionally biased toward gly residues. Residues glycine 237–tyrosine 248 show a composition bias toward polar residues. C2H2-type zinc fingers lie at residues tyrosine 278 to histidine 302, phenylalanine 308 to histidine 330, and phenylalanine 336 to histidine 358. The interval aspartate 349 to proline 410 is disordered. Residues arginine 353–glutamate 363 are compositionally biased toward basic residues. The segment covering serine 367–serine 380 has biased composition (low complexity).

It belongs to the EGR C2H2-type zinc-finger protein family. In terms of assembly, interacts with HCFC1. Interacts with WWP2. Interacts with UBC9. Interacts with CITED1. Interacts (via phosphorylated form) with SFN. Ubiquitinated by WWP2 leading to proteasomal degradation. In terms of processing, acetylated. May be deacetylated by HDAC6, HDAC10 or SIRT1.

It localises to the nucleus. It functions in the pathway protein modification; protein sumoylation. In terms of biological role, sequence-specific DNA-binding transcription factor. Plays a role in hindbrain segmentation by regulating the expression of a subset of homeobox containing genes and in Schwann cell myelination by regulating the expression of genes involved in the formation and maintenance of myelin. Binds to two EGR2-consensus sites EGR2A (5'-CTGTAGGAG-3') and EGR2B (5'-ATGTAGGTG-3') in the HOXB3 enhancer and promotes HOXB3 transcriptional activation. Binds to specific DNA sites located in the promoter region of HOXA4, HOXB2 and ERBB2. Regulates hindbrain segmentation by controlling the expression of Hox genes, such as HOXA4, HOXB3 and HOXB2, and thereby specifying odd and even rhombomeres. Promotes the expression of HOXB3 in the rhombomere r5 in the hindbrain. Regulates myelination in the peripheral nervous system after birth, possibly by regulating the expression of myelin proteins, such as MPZ, and by promoting the differentiation of Schwann cells. Involved in the development of the jaw openener musculature, probably by playing a role in its innervation through trigeminal motor neurons. May play a role in adipogenesis, possibly by regulating the expression of CEBPB. E3 SUMO-protein ligase helping SUMO1 conjugation to its coregulators NAB1 and NAB2, whose sumoylation down-regulates EGR2 transcriptional activity. In Cricetulus griseus (Chinese hamster), this protein is E3 SUMO-protein ligase EGR2 (EGR2).